The chain runs to 213 residues: Histone H1.2 (213 aa).

Low complexity predominate over residues Met1–Lys17. A disordered region spans residues Met1 to Ser41. Ser2 is subject to N-acetylserine; partial. Phosphoserine is present on Ser2. An N6-acetyllysine modification is found at Lys17. 3 positions are modified to N6-(2-hydroxyisobutyryl)lysine: Lys23, Lys26, and Lys27. Lys34 is modified (N6-(beta-hydroxybutyryl)lysine; alternate). Residue Lys34 is modified to N6-crotonyllysine; alternate. Lys34 carries the N6-methyllysine; alternate modification. The region spanning Ser36–Lys109 is the H15 domain. Lys46 bears the N6-(2-hydroxyisobutyryl)lysine mark. The residue at position 52 (Lys52) is an N6-(beta-hydroxybutyryl)lysine; alternate. Lys52 is subject to N6-(2-hydroxyisobutyryl)lysine; alternate. Arg54 is modified (citrulline). Lys63 carries the post-translational modification N6-(2-hydroxyisobutyryl)lysine. An N6-(beta-hydroxybutyryl)lysine; alternate modification is found at Lys64. N6-crotonyllysine; alternate is present on Lys64. Lys64 bears the N6-(2-hydroxyisobutyryl)lysine; alternate mark. Lys75 and Lys81 each carry N6-(2-hydroxyisobutyryl)lysine. Lys85 and Lys90 each carry N6-(beta-hydroxybutyryl)lysine; alternate. 3 positions are modified to N6-crotonyllysine; alternate: Lys85, Lys90, and Lys97. N6-(2-hydroxyisobutyryl)lysine; alternate is present on residues Lys85, Lys90, and Lys97. Residues Thr92–Lys213 are disordered. The residue at position 97 (Lys97) is an N6-succinyllysine; alternate. Phosphoserine; by PKC is present on Ser104. Lys106 bears the N6-(beta-hydroxybutyryl)lysine mark. Lys110, Lys117, Lys121, Lys129, and Lys136 each carry N6-(2-hydroxyisobutyryl)lysine. Residues Lys119–Lys140 are compositionally biased toward basic residues. At Thr146 the chain carries Phosphothreonine. Position 148 is an N6-(2-hydroxyisobutyryl)lysine (Lys148). The span at Lys149–Lys160 shows a compositional bias: basic residues. Residues Lys159 and Lys168 each carry the N6-crotonyllysine; alternate modification. Lys159 and Lys168 each carry N6-(2-hydroxyisobutyryl)lysine; alternate. Positions Lys169–Ala186 are enriched in basic residues. Residue Lys187 is modified to N6-methyllysine; by EHMT1 and EHMT2. At Ser188 the chain carries ADP-ribosylserine. The span at Val193–Lys213 shows a compositional bias: basic residues. Lys213 is modified (N6-(2-hydroxyisobutyryl)lysine).

It belongs to the histone H1/H5 family. As to quaternary structure, interacts with TSC22D1 isoforms 2 and 5. Post-translationally, H1 histones are progressively phosphorylated during the cell cycle, becoming maximally phosphorylated during late G2 phase and M phase, and being dephosphorylated sharply thereafter. In terms of processing, crotonylation (Kcr) is specifically present in male germ cells and marks testis-specific genes in post-meiotic cells, including X-linked genes that escape sex chromosome inactivation in haploid cells. Crotonylation marks active promoters and enhancers and confers resistance to transcriptional repressors. It is also associated with post-meiotically activated genes on autosomes. Citrullination at Arg-54 (H1R54ci) by PADI4 takes place within the DNA-binding site of H1 and results in its displacement from chromatin and global chromatin decondensation, thereby promoting pluripotency and stem cell maintenance. Post-translationally, ADP-ribosylated on Ser-188 in response to DNA damage.

It is found in the nucleus. It localises to the chromosome. Histone H1 protein binds to linker DNA between nucleosomes forming the macromolecular structure known as the chromatin fiber. Histones H1 are necessary for the condensation of nucleosome chains into higher-order structured fibers. Also acts as a regulator of individual gene transcription through chromatin remodeling, nucleosome spacing and DNA methylation. This Homo sapiens (Human) protein is Histone H1.2.